The sequence spans 293 residues: EID1-like F-box protein 1 (293 aa).

Residues 16–68 (QCTKGHLNEDVLLLVFQHLNWNPKLVATLSCVCRWFDDFAKRVLWKEFCKTRA) form the F-box domain. Residues 245–293 (AIPSEDNNHTEKKQDNGFPRENVLKRRNSLLGGSENGPPPQKRLTNPNQ) form a disordered region. Basic and acidic residues predominate over residues 250 to 259 (DNNHTEKKQD).

The sequence is that of EID1-like F-box protein 1 (EDL1) from Arabidopsis thaliana (Mouse-ear cress).